The following is a 41-amino-acid chain: Disintegrin obtustatin (41 aa).

4 disulfide bridges follow: Cys1–Cys10, Cys6–Cys29, Cys7–Cys34, and Cys19–Cys36. One can recognise a Disintegrin domain in the interval 1–41 (CTTGPCCRQCKLKPAGTTCWKTSLTSHYCTGKSCDCPLYPG). The short motif at 21 to 23 (KTS) is the Cell attachment site; atypical (KTS) element.

Belongs to the disintegrin family. Short disintegrin subfamily. Monomer. As to expression, expressed by the venom gland.

It is found in the secreted. In terms of biological role, is a potent and selective inhibitor of alpha-1/beta-1 (ITGA1/ITGB1) integrin. It blocks the adhesion of alpha-1/beta-1-expressing K562 cells to immobilized collagens IV and I with IC(50) of 2 and 0.5 nM, respectively. Potently inhibits angiogenesis in chicken and in mouse model and reduces tumor development by half. Is 25-fold less potent than viperistatin. The protein is Disintegrin obtustatin of Macrovipera lebetina obtusa (Levant blunt-nosed viper).